Consider the following 137-residue polypeptide: Prefoldin subunit alpha (137 aa).

It belongs to the prefoldin subunit alpha family. In terms of assembly, heterohexamer of two alpha and four beta subunits.

It localises to the cytoplasm. Molecular chaperone capable of stabilizing a range of proteins. Seems to fulfill an ATP-independent, HSP70-like function in archaeal de novo protein folding. This chain is Prefoldin subunit alpha (pfdA), found in Archaeoglobus fulgidus (strain ATCC 49558 / DSM 4304 / JCM 9628 / NBRC 100126 / VC-16).